Reading from the N-terminus, the 732-residue chain is Aldehyde oxidoreductase molybdenum-binding subunit PaoC (732 aa).

Mo-molybdopterin cytosine dinucleotide is bound by residues 241–242, 468–470, 511–512, 615–621, Gln625, and 688–691; these read GF, IGT, GA, RILNPKT, and KGVG. The active-site Proton acceptor is the Glu692.

The protein belongs to the xanthine dehydrogenase family. In terms of assembly, heterotrimer composed of PaoA, PaoB and PaoC. The cofactor is Mo-molybdopterin cytosine dinucleotide.

The protein localises to the periplasm. The catalysed reaction is an aldehyde + A + H2O = a carboxylate + AH2 + H(+). Its function is as follows. Oxidizes aldehydes to the corresponding carboxylic acids with a preference for aromatic aldehydes. It might play a role in the detoxification of aldehydes to avoid cell damage. This Escherichia coli O157:H7 protein is Aldehyde oxidoreductase molybdenum-binding subunit PaoC.